The following is a 119-amino-acid chain: uncharacterized protein (119 aa).

A disordered region spans residues 78–119 (SHRKSQQHQTQGNQVLRGTRKLESPTVGPRPGLRRQHTRNFL). Polar residues predominate over residues 84–93 (QHQTQGNQVL). The segment covering 109-119 (GLRRQHTRNFL) has biased composition (basic residues).

This is an uncharacterized protein from Saccharomyces cerevisiae (strain ATCC 204508 / S288c) (Baker's yeast).